Here is a 133-residue protein sequence, read N- to C-terminus: Small ribosomal subunit protein uS8 (133 aa).

This sequence belongs to the universal ribosomal protein uS8 family. In terms of assembly, part of the 30S ribosomal subunit. Contacts proteins S5 and S12.

One of the primary rRNA binding proteins, it binds directly to 16S rRNA central domain where it helps coordinate assembly of the platform of the 30S subunit. This is Small ribosomal subunit protein uS8 from Trichodesmium erythraeum (strain IMS101).